Here is a 181-residue protein sequence, read N- to C-terminus: Biofilm-surface layer protein A (181 aa).

Residues 1–28 (MKRKLLSSLAISALSLGLLVSAPTASFA) form the signal peptide.

The protein belongs to the BslA/BslB family. In terms of assembly, forms polymers.

It is found in the secreted. Its subcellular location is the cell wall. In terms of biological role, involved in biofilm formation. Self-polymerizes and forms a layer on the surface of biofilms that confers hydrophobicity to the biofilm. The layer is stable and capable of resistance to high mechanical force compression. Required for complex colony architecture. May function synergistically with exopolysaccharides and TasA amyloid fibers to facilitate the assembly of the biofilm matrix. The sequence is that of Biofilm-surface layer protein A from Bacillus subtilis (strain 168).